Here is a 253-residue protein sequence, read N- to C-terminus: DNA repair protein RecO (253 aa).

The protein belongs to the RecO family.

Functionally, involved in DNA repair and RecF pathway recombination. The polypeptide is DNA repair protein RecO (Streptococcus agalactiae serotype III (strain NEM316)).